Here is a 390-residue protein sequence, read N- to C-terminus: MPPSGLRLLPLLLPLLWLLVLTPGRPAAGLSTCKTIDMELVKRKRIEAIRGQILSKLRLASPPSQGEVPPGPLPEAVLALYNSTRAQVAGESAETEPEPEADYYAKEVTRVLMVEKENEIYKTVETGSHSIYMFFNTSELRAAVPDPMLLSRAELRLLRLKLSVEQHVELYQKYSNNSWRYLSNRLLTPSDSPEWLSFDVTGVVRQWLSQGGAMEGFRLSAHCSCDSKDNTLRVGINGFSSSRRGDLATIDGMNRPFLLLMATPLERAQQLHSSRHRRALDTNYCFSSTEKNCCVRQLYIDFRKDLGWKWIHEPKGYHANFCLGPCPYIWSLDTQYSKVLALYNQHNPGASAAPCCVPQVLEPLPIVYYVGRKPKVEQLSNMIVRSCKCS.

The first 29 residues, 1-29 (MPPSGLRLLPLLLPLLWLLVLTPGRPAAG), serve as a signal peptide directing secretion. Positions 30-74 (LSTCKTIDMELVKRKRIEAIRGQILSKLRLASPPSQGEVPPGPLP) are straightjacket domain. Residues 75-271 (EAVLALYNST…ATPLERAQQL (197 aa)) form an arm domain region. Asn82, Asn136, and Asn176 each carry an N-linked (GlcNAc...) asparagine glycan. A bowtie tail region spans residues 226-252 (DSKDNTLRVGINGFSSSRRGDLATIDG). A Cell attachment site motif is present at residues 244–246 (RGD). Disulfide bonds link Cys285-Cys294, Cys293-Cys356, Cys322-Cys387, and Cys326-Cys389.

This sequence belongs to the TGF-beta family. As to quaternary structure, homodimer; disulfide-linked. Interacts with the serine proteases, HTRA1 and HTRA3: the interaction with either inhibits TGFB1-mediated signaling and the HTRA protease activity is required for this inhibition. May interact with THSD4; this interaction may lead to sequestration by FBN1 microfibril assembly and attenuation of TGFB signaling. Interacts with CD109, DPT and ASPN. Interacts with EFEMP2. Interacts with TSKU; the interaction contributes to regulation of the hair cycle. Interacts with TGFBR3. Homodimer; disulfide-linked. Interacts with transforming growth factor beta-1 (TGF-beta-1) chain; interaction is non-covalent and maintains TGF-beta-1 in a latent state; each latency-associated peptide (LAP) monomer interacts with TGF-beta-1 in the other monomer. Interacts with LTBP1; leading to regulation of TGF-beta-1 activation. Interacts with LRRC32/GARP; leading to regulation of TGF-beta-1 activation on the surface of activated regulatory T-cells (Tregs). Interacts with LRRC33/NRROS; leading to regulation of TGF-beta-1 activation in macrophages and microglia. Interacts (via cell attachment site) with integrins ITGAV and ITGB6 (ITGAV:ITGB6), leading to release of the active TGF-beta-1. Latency-associated peptide: Interacts with NREP; the interaction results in a decrease in TGFB1 autoinduction. Interacts with HSP90AB1; inhibits latent TGFB1 activation. In terms of assembly, homodimer; disulfide-linked. Interacts with TGF-beta receptors (TGFBR1 and TGFBR2), leading to signal transduction. Post-translationally, transforming growth factor beta-1 proprotein: The precursor proprotein is cleaved in the Golgi apparatus by FURIN to form Transforming growth factor beta-1 (TGF-beta-1) and Latency-associated peptide (LAP) chains, which remain non-covalently linked, rendering TGF-beta-1 inactive. N-glycosylated. Deglycosylation leads to activation of Transforming growth factor beta-1 (TGF-beta-1); mechanisms triggering deglycosylation-driven activation of TGF-beta-1 are however unclear.

The protein resides in the secreted. It is found in the extracellular space. Its subcellular location is the extracellular matrix. In terms of biological role, transforming growth factor beta-1 proprotein: Precursor of the Latency-associated peptide (LAP) and Transforming growth factor beta-1 (TGF-beta-1) chains, which constitute the regulatory and active subunit of TGF-beta-1, respectively. Its function is as follows. Required to maintain the Transforming growth factor beta-1 (TGF-beta-1) chain in a latent state during storage in extracellular matrix. Associates non-covalently with TGF-beta-1 and regulates its activation via interaction with 'milieu molecules', such as LTBP1, LRRC32/GARP and LRRC33/NRROS, that control activation of TGF-beta-1. Interaction with LRRC33/NRROS regulates activation of TGF-beta-1 in macrophages and microglia. Interaction with LRRC32/GARP controls activation of TGF-beta-1 on the surface of activated regulatory T-cells (Tregs). Interaction with integrins (ITGAV:ITGB6 or ITGAV:ITGB8) results in distortion of the Latency-associated peptide chain and subsequent release of the active TGF-beta-1. Functionally, multifunctional protein that regulates the growth and differentiation of various cell types and is involved in various processes, such as normal development, immune function, microglia function and responses to neurodegeneration. Activation into mature form follows different steps: following cleavage of the proprotein in the Golgi apparatus, Latency-associated peptide (LAP) and Transforming growth factor beta-1 (TGF-beta-1) chains remain non-covalently linked rendering TGF-beta-1 inactive during storage in extracellular matrix. At the same time, LAP chain interacts with 'milieu molecules', such as LTBP1, LRRC32/GARP and LRRC33/NRROS that control activation of TGF-beta-1 and maintain it in a latent state during storage in extracellular milieus. TGF-beta-1 is released from LAP by integrins (ITGAV:ITGB6 or ITGAV:ITGB8): integrin-binding to LAP stabilizes an alternative conformation of the LAP bowtie tail and results in distortion of the LAP chain and subsequent release of the active TGF-beta-1. Once activated following release of LAP, TGF-beta-1 acts by binding to TGF-beta receptors (TGFBR1 and TGFBR2), which transduce signal. While expressed by many cells types, TGF-beta-1 only has a very localized range of action within cell environment thanks to fine regulation of its activation by Latency-associated peptide chain (LAP) and 'milieu molecules'. Plays an important role in bone remodeling: acts as a potent stimulator of osteoblastic bone formation, causing chemotaxis, proliferation and differentiation in committed osteoblasts. Can promote either T-helper 17 cells (Th17) or regulatory T-cells (Treg) lineage differentiation in a concentration-dependent manner. At high concentrations, leads to FOXP3-mediated suppression of RORC and down-regulation of IL-17 expression, favoring Treg cell development. At low concentrations in concert with IL-6 and IL-21, leads to expression of the IL-17 and IL-23 receptors, favoring differentiation to Th17 cells. Stimulates sustained production of collagen through the activation of CREB3L1 by regulated intramembrane proteolysis (RIP). Mediates SMAD2/3 activation by inducing its phosphorylation and subsequent translocation to the nucleus. Positively regulates odontoblastic differentiation in dental papilla cells, via promotion of IPO7-mediated translocation of phosphorylated SMAD2 to the nucleus and subsequent transcription of target genes. Can induce epithelial-to-mesenchymal transition (EMT) and cell migration in various cell types. The chain is Transforming growth factor beta-1 proprotein (TGFB1) from Equus caballus (Horse).